The chain runs to 347 residues: DNA-directed RNA polymerase subunit alpha (347 aa).

Residues 1 to 230 (MFKGFQKPKR…DHMTIFINFE (230 aa)) form an alpha N-terminal domain (alpha-NTD) region. An alpha C-terminal domain (alpha-CTD) region spans residues 247 to 347 (MNEVLNRSVE…EDDGQDQIGE (101 aa)). Residues 320 to 347 (GRLVAPPPSAGGGPDFGPEDDGQDQIGE) are disordered. The segment covering 336 to 347 (GPEDDGQDQIGE) has biased composition (acidic residues).

This sequence belongs to the RNA polymerase alpha chain family. As to quaternary structure, homodimer. The RNAP catalytic core consists of 2 alpha, 1 beta, 1 beta' and 1 omega subunit. When a sigma factor is associated with the core the holoenzyme is formed, which can initiate transcription.

The catalysed reaction is RNA(n) + a ribonucleoside 5'-triphosphate = RNA(n+1) + diphosphate. Its function is as follows. DNA-dependent RNA polymerase catalyzes the transcription of DNA into RNA using the four ribonucleoside triphosphates as substrates. The chain is DNA-directed RNA polymerase subunit alpha from Solibacter usitatus (strain Ellin6076).